The sequence spans 242 residues: DNA repair protein RecO (242 aa).

The protein belongs to the RecO family.

Its function is as follows. Involved in DNA repair and RecF pathway recombination. The sequence is that of DNA repair protein RecO from Paracoccus denitrificans (strain Pd 1222).